Consider the following 343-residue polypeptide: NAC domain-containing protein 4 (343 aa).

One can recognise an NAC domain in the interval 12 to 168 (LPPGFRFHPT…EWVLCRVFKK (157 aa)). A DNA-binding region spans residues 109–174 (VGMKKTLVFY…VFKKSLVEVG (66 aa)). Residues 304–333 (GGERERLSASQDTGLTSDVNPEISSSSGQK) form a disordered region. The segment covering 311–332 (SASQDTGLTSDVNPEISSSSGQ) has biased composition (polar residues).

As to expression, expressed in roots, tiller buds, stems, leaves, lamina joints and the young husks. Expressed in embryos, coleoptiles, radicles, leaf pulvinus, ligules, panicles, palea and lemma, anthers, and the internode of the peduncles. Expressed in young leaves, root meristems, florescence meristems and young spikelets.

The protein resides in the nucleus. Its function is as follows. Transcription factor involved in the regulation of tiller bud outgrowth, but does not seem to regulate tiller bud initiation. Possesses transactivation activity in yeast. Involved in the regulation of plant architecture and grain yield. Acts as a negative regulator of plant height and flowering time. Regulates directly key genes of the gibberellin (GA) pathway by binding to their promoters. Positively regulates leaf senescence in an age-dependent manner. Activates directly the expression of the chlorophyll degradation genes SGR and NYC3. Positively regulates the level of abscisic acid (ABA) by directly up-regulating the expression of the ABA biosynthetic genes NCED3 and ZEP, and down-regulating the ABA catabolic gene CYP707A5/ABA8OX1. Promotes salt-induced cell death accompanied by the loss of plasma membrane integrity, nuclear DNA fragmentation, and changes of caspase-like activity. Targets genes that encoded a reactive oxygen species (ROS) scavenger COX11 and a caspase-like protease AP37. Activates the potassium efflux channels GORK and SKOR. Acts as a positive regulator of drought and salt tolerance through ABA-mediated pathways. Acts as a negative regulator of root growth. Functions as an upstream integrator of auxin and cytokinin signals that affect CROWN ROOTLESS (CRL) and cyclin-dependent protein kinase (CDK) genes to regulate cell division during root development. Binds directly to the promoters of the auxin inactivation-related genes GH3.6 and GH3.8, the auxin signaling-related gene ARF25, and the cytokinin oxidase gene CKX4. Activates directly the expressions of the 1-aminocyclopropane-1-carboxylate oxidase genes ACO1 and ACO3, enhancing ethylene synthesis, and then retarding seedling establishment. The protein is NAC domain-containing protein 4 of Oryza sativa subsp. japonica (Rice).